Here is a 706-residue protein sequence, read N- to C-terminus: Cyclic nucleotide-gated channel alpha-3 (706 aa).

Over 1–189 the chain is Cytoplasmic; the sequence is MAKISTQYSH…MDPSSNMYYH (189 aa). The interval 113 to 177 is disordered; that stretch reads RESHVQFNVG…PKKEEKKKDS (65 aa). Positions 147 to 177 are enriched in basic and acidic residues; sequence SEKDDKAKKEEKEKKEEKKENPKKEEKKKDS. Residues 190 to 211 form a helical membrane-spanning segment; it reads WLTVIAVPVFYNWCLLVCRACF. Over 212–217 the chain is Extracellular; the sequence is DELQSE. Residues 218–238 form a helical membrane-spanning segment; the sequence is HLMLWLVLDYSADILYGMDML. Residues 239–265 are Cytoplasmic-facing; it reads VRARTGFLEQGLMVMDASRLWKHYTQT. The chain crosses the membrane as a helical span at residues 266–285; it reads LHFKLDVLSLVPTDLAYFKL. The Extracellular portion of the chain corresponds to 286–289; that stretch reads GMNY. A helical membrane pass occupies residues 290 to 307; that stretch reads PELRFNRLLKLARLFEFF. Topologically, residues 308 to 317 are cytoplasmic; that stretch reads DRTETRTNYP. An ion conduction pathway region spans residues 317–425; sequence PNMFRIGNLV…GNVGSMISNM (109 aa). Residues 318-340 form a helical membrane-spanning segment; that stretch reads NMFRIGNLVLYILIIIHWNACIY. The Extracellular segment spans residues 341 to 366; the sequence is FAISKFIGFGTDSWVYPNVSNPEYGR. N-linked (GalNAc...) asparagine glycosylation occurs at asparagine 358. Helical transmembrane passes span 367 to 397 and 398 to 422; these read LSRK…DEEY and LFVV…GSMI. Positions 384–387 are selectivity filter; that stretch reads TIGE. Residues 423-706 are Cytoplasmic-facing; that stretch reads SNMNASRAEF…DAPQTEASQP (284 aa). Residues 427 to 504 form a C-linker region; sequence ASRAEFQAKI…TLRKVRIFQD (78 aa). The segment at 507 to 627 is cyclic nucleotide-binding domain; that stretch reads AGLLVELVLK…EEKGRQILMK (121 aa). 3',5'-cyclic GMP-binding residues include glycine 567, glutamate 568, serine 570, arginine 583, threonine 584, and aspartate 628. Residues 645-688 adopt a coiled-coil conformation; sequence IEEKVEHLETSLDSLQTRFARLLAEYNATQMKVKQRLSQLESQV. Positions 685–706 are disordered; sequence ESQVKMGLPPDGDAPQTEASQP.

Belongs to the cyclic nucleotide-gated cation channel (TC 1.A.1.5) family. CNGA3 subfamily. In terms of assembly, forms heterotetrameric channels composed of CNGA3 and CNGB3 subunits with 3:1 stoichiometry. Testis, kidney, retinal cone (at protein level) and heart.

It is found in the cell membrane. The catalysed reaction is Ca(2+)(in) = Ca(2+)(out). It carries out the reaction Na(+)(in) = Na(+)(out). The enzyme catalyses K(+)(in) = K(+)(out). It catalyses the reaction NH4(+)(in) = NH4(+)(out). The catalysed reaction is Rb(+)(in) = Rb(+)(out). It carries out the reaction Li(+)(in) = Li(+)(out). The enzyme catalyses Cs(+)(in) = Cs(+)(out). Its activity is regulated as follows. Ca(2+) influx is inhibited by extracellular Mg(2+) ions. Functionally, pore-forming subunit of the cone cyclic nucleotide-gated channel. Mediates cone photoresponses at bright light converting transient changes in intracellular cGMP levels into electrical signals. In the dark, cGMP levels are high and keep the channel open enabling a steady inward current carried by Na(+) and Ca(2+) ions that leads to membrane depolarization and neurotransmitter release from synaptic terminals. Upon photon absorption cGMP levels decline leading to channel closure and membrane hyperpolarization that ultimately slows neurotransmitter release and signals the presence of light, the end point of the phototransduction cascade. Pore-forming subunit of the gustatory cyclic nucleotide-gated channel. In the taste buds, may sense oral extracellular pH and conduct ion currents that modulate the excitability of taste cells. Conducts cGMP- and cAMP-gated ion currents, with permeability for monovalent and divalent cations. The sequence is that of Cyclic nucleotide-gated channel alpha-3 from Bos taurus (Bovine).